A 99-amino-acid chain; its full sequence is Bacterial microcompartment protein homohexamer (99 aa).

One can recognise a BMC domain in the interval Ala-4–Pro-88.

It belongs to the bacterial microcompartments protein family. As to quaternary structure, homohexamer with a small central pore. When purified protein is examined by atomic force microscopy it dynamically makes uniform patches about 35 Angstroms thick with hexamers in the same orientation. In the BMC the concave side faces outward, with the N- and C-terminii exposed to the cytoplasm.

It localises to the bacterial microcompartment. Its function is as follows. The only hexameric shell protein in this bacterium, it forms the majority of the bacterial microcompartment (BMC) shell. Expression of 5 proteins in E.coli (BMC-H (Hoch_5815), BMC-P (Hoch_5814), and 3 BMC-T (Hoch_5812, Hoch_5816, Hoch_3341)) forms a 40 nm artificial BMC with a molecular mass of 6.5 MDa. There are 60 BMC-H hexamers per BMC. The shell facets are 20-30 Angstroms thick (a single hexamer layer), with 1 of BMC-T trimers protruding to the exterior. In Haliangium ochraceum (strain DSM 14365 / JCM 11303 / SMP-2), this protein is Bacterial microcompartment protein homohexamer.